Consider the following 399-residue polypeptide: tRNA-dihydrouridine(16/17) synthase [NAD(P)(+)] (399 aa).

Residues 24-26 (PMV) and Q80 each bind FMN. The active-site Proton donor is C109. Residues K148, H176, 211-213 (NGN), and 235-236 (AE) contribute to the FMN site.

Belongs to the Dus family. Dus1 subfamily. It depends on FMN as a cofactor.

The protein localises to the nucleus. It is found in the mitochondrion. The catalysed reaction is 5,6-dihydrouridine(16) in tRNA + NADP(+) = uridine(16) in tRNA + NADPH + H(+). It carries out the reaction 5,6-dihydrouridine(16) in tRNA + NAD(+) = uridine(16) in tRNA + NADH + H(+). It catalyses the reaction 5,6-dihydrouridine(17) in tRNA + NAD(+) = uridine(17) in tRNA + NADH + H(+). The enzyme catalyses 5,6-dihydrouridine(17) in tRNA + NADP(+) = uridine(17) in tRNA + NADPH + H(+). The catalysed reaction is a 5,6-dihydrouridine in mRNA + NAD(+) = a uridine in mRNA + NADH + H(+). It carries out the reaction a 5,6-dihydrouridine in mRNA + NADP(+) = a uridine in mRNA + NADPH + H(+). In terms of biological role, catalyzes the synthesis of dihydrouridine, a modified base found in the D-loop of most tRNAs. Also able to mediate dihydrouridylation of some mRNAs, thereby affecting their translation. The chain is tRNA-dihydrouridine(16/17) synthase [NAD(P)(+)] from Schizosaccharomyces pombe (strain 972 / ATCC 24843) (Fission yeast).